A 431-amino-acid polypeptide reads, in one-letter code: Enolase (431 aa).

Residues 27 to 47 (LESGHSGRAAVPSGASTGSRE) form a disordered region. Position 163 (glutamine 163) interacts with (2R)-2-phosphoglycerate. The Proton donor role is filled by glutamate 205. Residues aspartate 242, glutamate 285, and aspartate 312 each contribute to the Mg(2+) site. Positions 337, 366, 367, and 388 each coordinate (2R)-2-phosphoglycerate. The Proton acceptor role is filled by lysine 337.

It belongs to the enolase family. Mg(2+) serves as cofactor.

It is found in the cytoplasm. Its subcellular location is the secreted. It localises to the cell surface. It carries out the reaction (2R)-2-phosphoglycerate = phosphoenolpyruvate + H2O. The protein operates within carbohydrate degradation; glycolysis; pyruvate from D-glyceraldehyde 3-phosphate: step 4/5. In terms of biological role, catalyzes the reversible conversion of 2-phosphoglycerate (2-PG) into phosphoenolpyruvate (PEP). It is essential for the degradation of carbohydrates via glycolysis. The protein is Enolase of Oleidesulfovibrio alaskensis (strain ATCC BAA-1058 / DSM 17464 / G20) (Desulfovibrio alaskensis).